Consider the following 86-residue polypeptide: Insulin (86 aa).

Intrachain disulfides connect cysteine 7–cysteine 72, cysteine 19–cysteine 85, and cysteine 71–cysteine 76. A propeptide spans 33–63 (c peptide); sequence EAEDPQVGEVELGGGPGLGGLQPLALAGPQQ.

Belongs to the insulin family. As to quaternary structure, heterodimer of a B chain and an A chain linked by two disulfide bonds.

The protein resides in the secreted. Insulin decreases blood glucose concentration. It increases cell permeability to monosaccharides, amino acids and fatty acids. It accelerates glycolysis, the pentose phosphate cycle, and glycogen synthesis in liver. This is Insulin (INS) from Equus caballus (Horse).